The sequence spans 360 residues: Decorin (360 aa).

An N-terminal signal peptide occupies residues 1–16; it reads MKATIIFLLLAQVSWA. The propeptide occupies 17-30; it reads GPFQQRGLFDFMLE. The O-linked (Xyl...) (glycosaminoglycan) serine glycan is linked to Ser-34. Cystine bridges form between Cys-55–Cys-61 and Cys-59–Cys-68. LRR repeat units follow at residues 74–94, 95–118, 119–142, 143–163, 164–187, 188–213, 214–234, 235–258, 259–282, 283–305, 306–335, and 336–360; these read DKVP…NNKI, TEIK…NNKI, SKIS…KNHL, KELP…ENEI, TKVR…TNPL, KSSG…DTNI, TTIP…GNKI, TKVD…FNSI, SAVD…NNKL, IKVP…NNNI, SAVG…SNPV, and QYWE…GNYK. N-linked (GlcNAc...) asparagine glycosylation occurs at Asn-212. Residues Asn-263 and Asn-304 are each glycosylated (N-linked (GlcNAc...) asparagine). Cys-314 and Cys-347 form a disulfide bridge.

This sequence belongs to the small leucine-rich proteoglycan (SLRP) family. SLRP class I subfamily. In terms of assembly, binds to type I and type II collagen, fibronectin and TGF-beta. Forms a ternary complex with MFAP2 and ELN. Interacts with DPT. The attached glycosaminoglycan chain can be either chondroitin sulfate or dermatan sulfate depending upon the tissue of origin.

The protein localises to the secreted. It localises to the extracellular space. It is found in the extracellular matrix. Its function is as follows. May affect the rate of fibrils formation. The protein is Decorin (DCN) of Equus caballus (Horse).